The chain runs to 147 residues: Ubiquitin-conjugating enzyme E2 D2B (147 aa).

The region spanning 1-147 (MALKRIHKEL…AREWTQKYAM (147 aa)) is the UBC core domain. Catalysis depends on C85, which acts as the Glycyl thioester intermediate.

This sequence belongs to the ubiquitin-conjugating enzyme family. Interacts with CNOT4 (via RING domain). As to expression, testis-specific. Mainly expressed in the round spermatids (at protein level).

The catalysed reaction is S-ubiquitinyl-[E1 ubiquitin-activating enzyme]-L-cysteine + [E2 ubiquitin-conjugating enzyme]-L-cysteine = [E1 ubiquitin-activating enzyme]-L-cysteine + S-ubiquitinyl-[E2 ubiquitin-conjugating enzyme]-L-cysteine.. It functions in the pathway protein modification; protein ubiquitination. In terms of biological role, catalyzes the covalent attachment of ubiquitin to other proteins. Mediates the selective degradation of short-lived and abnormal proteins. Functions in the E6/E6-AP-induced ubiquitination of p53/TP53. Mediates ubiquitination of PEX5 and SQSTM1 and autoubiquitination of STUB1 and TRAF6. Involved in the signal-induced conjugation and subsequent degradation of NFKBIA, FBXW2-mediated GCM1 ubiquitination and degradation, MDM2-dependent degradation of p53/TP53 and the activation of MAVS in the mitochondria by RIGI in response to viral infection Plays a role in early maturation of the testis. The chain is Ubiquitin-conjugating enzyme E2 D2B (Ube2d2b) from Rattus norvegicus (Rat).